Consider the following 231-residue polypeptide: Fibronectin type III domain-containing protein 4 (231 aa).

Residues 1–40 (MPLAPPANSVETMASLMPLSPYLSPTVLLLVSCDLGFVRA) form the signal peptide. The Extracellular segment spans residues 41-163 (DRPPSPVNVT…GLDGERPLQT (123 aa)). A Fibronectin type-III domain is found at 43–136 (PPSPVNVTVT…PRVHFRTLKG (94 aa)). 2 N-linked (GlcNAc...) asparagine glycosylation sites follow: Asn48 and Asn143. A disordered region spans residues 118 to 156 (GLRGESPPGPRVHFRTLKGSDRLPSNSSSPGDITVEGLD). Residues 164–184 (GEVVIIVVVLLMWAAVIGLFC) form a helical membrane-spanning segment. Residues 185-231 (RQYDIIKDNDSNNNPKEKGKGPEQSPQGRPVGTTRQKKSPSINTIDV) are Cytoplasmic-facing. The segment covering 193–205 (NDSNNNPKEKGKG) has biased composition (basic and acidic residues). Residues 193 to 231 (NDSNNNPKEKGKGPEQSPQGRPVGTTRQKKSPSINTIDV) form a disordered region.

In terms of tissue distribution, predominantly expressed in the liver and in the brain, including in the cortex, hypothalamus and hippocampus. Also expressed in heart, lung, kidney and testis. In the colon, expressed in the epithelium and in a subset of immune cells in lymphoid aggregates.

It is found in the membrane. The protein resides in the secreted. In terms of biological role, has anti-inflammatory properties. In the colon, acts on macrophages to down-regulate inflammation. May suppress osteoclastogenesis and mature osteoclast resorptive function. In white adipose tissue, decreases local inflammation, via interaction with GPR116. Also required for proper systemic glucose tolerance, specifically sensitizing white adipocytes to insulin and promoting glucose uptake. The insulin sensitizing function in adipose tissue is mediated by interaction with ADGRF5/GPR116 and activation of cAMP signaling. The protein is Fibronectin type III domain-containing protein 4 (Fndc4) of Mus musculus (Mouse).